We begin with the raw amino-acid sequence, 170 residues long: Protein ripply3 (170 aa).

Positions 40–43 (WRPW) match the WRPW motif motif. A compositionally biased stretch (basic and acidic residues) spans 51 to 61 (ELDGQQRRSGE). The segment at 51-78 (ELDGQQRRSGEADGVPTNTGPKGALGFQ) is disordered. The segment at 79–114 (HPVRLYMPKSKTSEYLQHMGRKVLASFPVQATIHFY) is ripply homology domain. Polar residues predominate over residues 142 to 155 (GVDSSRGSSDNYSV). Residues 142 to 170 (GVDSSRGSSDNYSVQGGPKRNIGSHAGSA) are disordered.

This sequence belongs to the ripply family. As to quaternary structure, interacts with tbx1 and tle4/grg4. As to expression, at neurula stage, expressed in the region close to the heart mesoderm. At the tailbud stage, expressed in the pharyngeal region.

The protein resides in the nucleus. Functionally, acts as a transcriptional corepressor. Negative regulator of the transcriptional activity of tbx1 that plays a key role in pharyngeal development. Plays a role in the formation of the anteroposterior (AP) axis during embryonic development; required to establish the posterolateral border of the pre-placodal ectoderm (PPE) acting downstream of the retinoic acid receptor (RAR) signaling. The polypeptide is Protein ripply3 (ripply3) (Xenopus laevis (African clawed frog)).